The primary structure comprises 1224 residues: DNA-directed RNA polymerase subunit beta'' (1224 aa).

The Zn(2+) site is built by Cys223, Cys297, Cys304, and Cys307.

It belongs to the RNA polymerase beta' chain family. RpoC2 subfamily. As to quaternary structure, in plastids the minimal PEP RNA polymerase catalytic core is composed of four subunits: alpha, beta, beta', and beta''. When a (nuclear-encoded) sigma factor is associated with the core the holoenzyme is formed, which can initiate transcription. Requires Zn(2+) as cofactor.

The protein localises to the plastid. It is found in the chloroplast. The enzyme catalyses RNA(n) + a ribonucleoside 5'-triphosphate = RNA(n+1) + diphosphate. In terms of biological role, DNA-dependent RNA polymerase catalyzes the transcription of DNA into RNA using the four ribonucleoside triphosphates as substrates. The polypeptide is DNA-directed RNA polymerase subunit beta'' (Porphyra purpurea (Red seaweed)).